The following is a 364-amino-acid chain: Ribosomal RNA small subunit methyltransferase H (364 aa).

S-adenosyl-L-methionine contacts are provided by residues Gly-55–His-57, Asp-75, Phe-101, Asp-122, and Gln-129. Residues Leu-333–Arg-364 form a disordered region.

It belongs to the methyltransferase superfamily. RsmH family.

The protein localises to the cytoplasm. The enzyme catalyses cytidine(1402) in 16S rRNA + S-adenosyl-L-methionine = N(4)-methylcytidine(1402) in 16S rRNA + S-adenosyl-L-homocysteine + H(+). Functionally, specifically methylates the N4 position of cytidine in position 1402 (C1402) of 16S rRNA. This is Ribosomal RNA small subunit methyltransferase H from Bordetella bronchiseptica (strain ATCC BAA-588 / NCTC 13252 / RB50) (Alcaligenes bronchisepticus).